The sequence spans 288 residues: Alpha/beta hydrolase domain-containing protein 17B (288 aa).

Residues S170, D235, and H264 each act as charge relay system in the active site.

Belongs to the AB hydrolase superfamily. ABHD17 family. In terms of processing, palmitoylated on cysteine residues located in a cysteine cluster at the N-terminus which promotes membrane localization.

The protein resides in the cell membrane. It localises to the recycling endosome membrane. Its subcellular location is the cell projection. It is found in the dendritic spine. The protein localises to the postsynaptic density membrane. The enzyme catalyses S-hexadecanoyl-L-cysteinyl-[protein] + H2O = L-cysteinyl-[protein] + hexadecanoate + H(+). Functionally, hydrolyzes fatty acids from S-acylated cysteine residues in proteins. Has depalmitoylating activity towards NRAS. This is Alpha/beta hydrolase domain-containing protein 17B from Gallus gallus (Chicken).